A 751-amino-acid chain; its full sequence is Transposable element P transposase (751 aa).

The THAP-type zinc-finger motif lies at 1 to 77 (MKYCKFCCKA…LNADAVPSKV (77 aa)).

In terms of biological role, P-element transposase that specifically mediates transposition of P-elements. Mediates both; precise and imprecise excision. This chain is Transposable element P transposase, found in Drosophila melanogaster (Fruit fly).